The sequence spans 500 residues: NAD(P)H-quinone oxidoreductase chain 4, chloroplastic (500 aa).

A run of 14 helical transmembrane segments spans residues 4–24 (FPWLTIIVVFPISAGLSIFFL), 37–57 (ICICLLELLLMTYVFCYHFQL), 87–107 (IGPILLTGFITTLATLAAWPV), 113–130 (LFHFLMLAMYSGQIGLFS), 134–154 (LLLFFLMWELELIPVYLLLSM), 167–187 (FILYTAGGSVFLLMGVLGMGL), 211–231 (ILFYFGFLIAYAVKLPIIPLH), 242–262 (HYSTCMLLAGILLKMGAYGLV), 272–292 (AHSIFSPWLVLAGTLQIIYAA), 305–325 (IAYSSVSHMGFTIIGIGSITD), 330–350 (GAILQLLSHGFLGAALFFLAG), 386–406 (LALPGMSGFVAEAVVFFGIIT), 416–436 (ILITFVMAIGMILTPIYLLSM), and 462–482 (LFVSICIFLPVIGIGIYPDFV).

This sequence belongs to the complex I subunit 4 family.

It is found in the plastid. The protein localises to the chloroplast thylakoid membrane. It carries out the reaction a plastoquinone + NADH + (n+1) H(+)(in) = a plastoquinol + NAD(+) + n H(+)(out). The catalysed reaction is a plastoquinone + NADPH + (n+1) H(+)(in) = a plastoquinol + NADP(+) + n H(+)(out). The polypeptide is NAD(P)H-quinone oxidoreductase chain 4, chloroplastic (Acorus calamus var. americanus (American sweet flag)).